The sequence spans 188 residues: UPF0398 protein BBR47_29830 (188 aa).

The protein belongs to the UPF0398 family.

The chain is UPF0398 protein BBR47_29830 from Brevibacillus brevis (strain 47 / JCM 6285 / NBRC 100599).